A 532-amino-acid polypeptide reads, in one-letter code: Flavin-containing monooxygenase 1 (532 aa).

The residue at position 2 (Ala-2) is an N-acetylalanine. At 2–510 (AKRVAIVGAG…TRIVQESPTP (509 aa)) the chain is on the lumenal side. FAD contacts are provided by residues 9-13 (GAGVS), Glu-32, 40-41 (LW), and 61-62 (NS). Residues 60–61 (SN) and 195–198 (SGTD) contribute to the NADP(+) site. A helical transmembrane segment spans residues 511–531 (FASLLKLLSLLALLMAIFLIF). Residue Leu-532 is a topological domain, cytoplasmic.

This sequence belongs to the FMO family. FAD serves as cofactor. As to expression, liver.

The protein resides in the endoplasmic reticulum membrane. It catalyses the reaction hypotaurine + NADPH + O2 + H(+) = taurine + NADP(+) + H2O. The catalysed reaction is hypotaurine + NADH + O2 + H(+) = taurine + NAD(+) + H2O. The enzyme catalyses trimethylamine + NADPH + O2 = trimethylamine N-oxide + NADP(+) + H2O. It carries out the reaction N,N-dimethylaniline + NADPH + O2 + H(+) = N,N-dimethylaniline N-oxide + NADP(+) + H2O. Broad spectrum monooxygenase that catalyzes the oxygenation of a wide variety of nitrogen- and sulfur-containing compounds including xenobiotics. Catalyzes the S-oxygenation of hypotaurine to produce taurine, an organic osmolyte involved in cell volume regulation as well as a variety of cytoprotective and developmental processes. In vitro, catalyzes the N-oxygenation of trimethylamine (TMA) to produce trimethylamine N-oxide (TMAO) and could therefore participate to the detoxification of this compound that is generated by the action of gut microbiota from dietary precursors such as choline, choline containing compounds, betaine or L-carnitine. This is Flavin-containing monooxygenase 1 (FMO1) from Canis lupus familiaris (Dog).